An 841-amino-acid polypeptide reads, in one-letter code: Probable outer membrane usher protein EcpC (841 aa).

Residues methionine 1–alanine 29 form the signal peptide.

Belongs to the EcpC/MatD family.

Its function is as follows. Part of the ecpRABCDE operon, which encodes the E.coli common pilus (ECP). ECP is found in both commensal and pathogenic strains and plays a dual role in early-stage biofilm development and host cell recognition. The polypeptide is Probable outer membrane usher protein EcpC (ecpC) (Escherichia coli O127:H6 (strain E2348/69 / EPEC)).